We begin with the raw amino-acid sequence, 135 residues long: Fatty acid-binding protein 5 (135 aa).

Residue A2 is modified to N-acetylalanine. A Phosphoserine modification is found at S3. A Nuclear localization signal motif is present at residues 24-34; that stretch reads KELGVGLALRK. The 1-eicosanoylglycerol site is built by C43, T56, and R109. The cysteines at positions 120 and 127 are disulfide-linked. 129–131 provides a ligand contact to 1-eicosanoylglycerol; that stretch reads RVY. 129-131 contacts (9Z,12Z)-octadecadienoate; sequence RVY. Y131 serves as a coordination point for hexadecanoate. N-eicosanoyl ethanolamine is bound at residue Y131. Y131 carries the phosphotyrosine modification.

This sequence belongs to the calycin superfamily. Fatty-acid binding protein (FABP) family. Monomer. As to expression, widely expressed.

It localises to the cytoplasm. Its subcellular location is the nucleus. The protein resides in the synapse. It is found in the postsynaptic density. The protein localises to the secreted. It carries out the reaction hexadecanoate(out) = hexadecanoate(in). It catalyses the reaction (9Z,12Z)-octadecadienoate(out) = (9Z,12Z)-octadecadienoate(in). The catalysed reaction is (9Z)-octadecenoate(out) = (9Z)-octadecenoate(in). Functionally, intracellular carrier for long-chain fatty acids and related active lipids, such as endocannabinoids, that regulate the metabolism and actions of the ligands they bind. In addition to the cytosolic transport, selectively delivers specific fatty acids from the cytosol to the nucleus, wherein they activate nuclear receptors. Delivers retinoic acid to the nuclear receptor peroxisome proliferator-activated receptor delta; which promotes proliferation and survival. May also serve as a synaptic carrier of endocannabinoid at central synapses and thus controls retrograde endocannabinoid signaling. Modulates inflammation by regulating PTGES induction via NF-kappa-B activation, and prostaglandin E2 (PGE2) biosynthesis during inflammation. May be involved in keratinocyte differentiation. This chain is Fatty acid-binding protein 5, found in Mus musculus (Mouse).